Here is a 1648-residue protein sequence, read N- to C-terminus: eIF-2-alpha kinase GCN2 (1648 aa).

The tract at residues 1–26 (MAGGRGASGRGRAEPQESYSQRQDHE) is disordered. Residues 25–137 (HELQALEAIY…HHVQSFLSEH (113 aa)) enclose the RWD domain. The stretch at 146 to 205 (HEEMLERQAQEKQQRLLEARRKEEQEQREILHEIQRRKEEIKEEKKRKEMAKQERLEITS) forms a coiled coil. Position 230 is a phosphoserine (S230). 2 consecutive Protein kinase domains span residues 286–538 (VGSD…HSFI) and 589–1000 (FEEL…SELL). Residues 595–603 (LGKGAFGAV) and K618 each bind ATP. The tract at residues 661 to 784 (PAVPGTPPPD…CNQKDGSHEI (124 aa)) is disordered. At T666 the chain carries Phosphothreonine. Polar residues-rich tracts occupy residues 673-686 (PQAQ…GKTS) and 704-722 (LSSS…STRF). Composition is skewed to acidic residues over residues 730-739 (SSDEEDEDER) and 753-763 (SDSDIIFDNED). Basic and acidic residues predominate over residues 775 to 784 (CNQKDGSHEI). The active-site Proton acceptor is D846. Position 869 is a phosphothreonine (T869). 2 positions are modified to phosphothreonine; by autocatalysis: T898 and T903. Residues 1021-1492 (IDGKAYRTMM…DHVMQKLRTK (472 aa)) form a histidyl-tRNA synthetase-like region. Position 1258 is an N6-acetyllysine (K1258).

It belongs to the protein kinase superfamily. Ser/Thr protein kinase family. GCN2 subfamily. In terms of assembly, homodimer; homodimerization is important for kinase activation by uncharged tRNAs. Interacts with GCN1; this interaction stimulates EIF2AK4/GCN2 kinase activity and is impaired by IMPACT upon a variety of stress conditions, such as amino acid depletion, UV-C irradiation, proteasome inhibitor treatment and glucose deprivation. Interacts with DNAJC3; this interaction inhibits EIF2AK4/GCN2 kinase activity during endoplasmic reticulum (ER), hypothermic and amino acid-starving stress conditions. Interacts with MAP3K20; activates EIF2AK4/GCN2 kinase activity in response to moderate ribotoxic stress. Post-translationally, autophosphorylated; autophosphorylation on Thr-898 is increased upon amino acid starvation and in UV irradiation cells and inhibited in presence of IMPACT. In terms of tissue distribution, expressed in liver. Expressed predominantly in the hippocampal CA1 region and the dentate gyrus, and to a lesser degree in CA3 (at protein level). Expressed in liver, lung, brain, kidney, skeletal muscle and testis. Expressed weakly in heart and spleen. Expressed in the hippocampal CA1 and CA3 regions, the dentate gyrus and cerebellum. Isoform 1 is widely expressed. Isoform 1 is expressed in brain, liver, skeletal muscle and testis. Isoform 3 is expressed in lung, brain, testis, prostate and choroid plexus. Isoform 4 is expressed in muscle, lung, kidney, brain, testis and prostate.

It localises to the cytoplasm. The enzyme catalyses L-seryl-[protein] + ATP = O-phospho-L-seryl-[protein] + ADP + H(+). It catalyses the reaction L-threonyl-[protein] + ATP = O-phospho-L-threonyl-[protein] + ADP + H(+). (Microbial infection) Kinase activity is enhanced by alphavirus genomic RNA sequences. Kinase activity is stimulated upon binding to uncharged tRNAs. Activated by serum starvation (in vitro). Its function is as follows. Metabolic-stress sensing protein kinase that phosphorylates the alpha subunit of eukaryotic translation initiation factor 2 (EIF2S1/eIF-2-alpha) in response to low amino acid availability. Plays a role as an activator of the integrated stress response (ISR) required for adaptation to amino acid starvation. EIF2S1/eIF-2-alpha phosphorylation in response to stress converts EIF2S1/eIF-2-alpha into a global protein synthesis inhibitor, leading to a global attenuation of cap-dependent translation, and thus to a reduced overall utilization of amino acids, while concomitantly initiating the preferential translation of ISR-specific mRNAs, such as the transcriptional activator ATF4, and hence allowing ATF4-mediated reprogramming of amino acid biosynthetic gene expression to alleviate nutrient depletion. Required for the translational induction of protein kinase PRKCH following amino acid starvation. Binds uncharged tRNAs. Involved in cell cycle arrest by promoting cyclin D1 mRNA translation repression after the unfolded protein response pathway (UPR) activation or cell cycle inhibitor CDKN1A/p21 mRNA translation activation in response to amino acid deprivation. Plays a role in the consolidation of synaptic plasticity, learning as well as formation of long-term memory. Plays a role in neurite outgrowth inhibition. Plays a role in feeding behavior to maintain amino acid homeostasis; contributes to the innate aversion toward diets of imbalanced amino acid composition. Plays a proapoptotic role in response to glucose deprivation. Promotes global cellular protein synthesis repression in response to UV irradiation independently of the stress-activated protein kinase/c-Jun N-terminal kinase (SAPK/JNK) and p38 MAPK signaling pathways. (Microbial infection) Plays a role in the antiviral response against alphavirus infection; impairs early viral mRNA translation of the incoming genomic virus RNA, thus preventing alphavirus replication. Functionally, (Microbial infection) Plays a role in modulating the adaptive immune response to Yellow fever virus infection; promotes dendritic cells to initiate autophagy and antigene presentation to both CD4(+) and CD8(+) T-cells under amino acid starvation. This Mus musculus (Mouse) protein is eIF-2-alpha kinase GCN2.